The chain runs to 217 residues: IMPACT family member YvyE (217 aa).

It belongs to the IMPACT family.

The polypeptide is IMPACT family member YvyE (yvyE) (Bacillus subtilis (strain 168)).